The sequence spans 173 residues: Large ribosomal subunit protein uL10 (173 aa).

The protein belongs to the universal ribosomal protein uL10 family. In terms of assembly, part of the ribosomal stalk of the 50S ribosomal subunit. The N-terminus interacts with L11 and the large rRNA to form the base of the stalk. The C-terminus forms an elongated spine to which L12 dimers bind in a sequential fashion forming a multimeric L10(L12)X complex.

Its function is as follows. Forms part of the ribosomal stalk, playing a central role in the interaction of the ribosome with GTP-bound translation factors. The protein is Large ribosomal subunit protein uL10 of Geobacter sp. (strain M21).